The primary structure comprises 456 residues: Probable polygalacturonase At3g15720 (456 aa).

Residues 1–23 form the signal peptide; that stretch reads MKKKTWFLNFSLFFLQIFTSSNA. 6 PbH1 repeats span residues 169–195, 196–217, 219–239, 249–270, 278–299, and 314–341; these read CNYV…DVGA, SSNV…AINS, TSNI…SIGS, VENV…RIKT, ARMI…IIDQ, and SSAV…DFRC. D210 acts as the Proton donor in catalysis. The active site involves H233.

The protein belongs to the glycosyl hydrolase 28 family.

The protein localises to the secreted. Its subcellular location is the cell wall. It catalyses the reaction (1,4-alpha-D-galacturonosyl)n+m + H2O = (1,4-alpha-D-galacturonosyl)n + (1,4-alpha-D-galacturonosyl)m.. The polypeptide is Probable polygalacturonase At3g15720 (Arabidopsis thaliana (Mouse-ear cress)).